The sequence spans 921 residues: Isoleucine--tRNA ligase (921 aa).

The short motif at 59-69 (PYANGHLHIGH) is the 'HIGH' region element. L-isoleucyl-5'-AMP is bound at residue glutamate 569. The 'KMSKS' region motif lies at 610-614 (KMSKS). Lysine 613 is an ATP binding site. Zn(2+)-binding residues include cysteine 894, cysteine 897, cysteine 909, and cysteine 912.

This sequence belongs to the class-I aminoacyl-tRNA synthetase family. IleS type 1 subfamily. As to quaternary structure, monomer. Zn(2+) is required as a cofactor.

It localises to the cytoplasm. It carries out the reaction tRNA(Ile) + L-isoleucine + ATP = L-isoleucyl-tRNA(Ile) + AMP + diphosphate. Functionally, catalyzes the attachment of isoleucine to tRNA(Ile). As IleRS can inadvertently accommodate and process structurally similar amino acids such as valine, to avoid such errors it has two additional distinct tRNA(Ile)-dependent editing activities. One activity is designated as 'pretransfer' editing and involves the hydrolysis of activated Val-AMP. The other activity is designated 'posttransfer' editing and involves deacylation of mischarged Val-tRNA(Ile). The protein is Isoleucine--tRNA ligase of Campylobacter lari (strain RM2100 / D67 / ATCC BAA-1060).